The chain runs to 802 residues: Leucine--tRNA ligase (802 aa).

A 'HIGH' region motif is present at residues 40–51 (PYPSGAGLHVGH). A 'KMSKS' region motif is present at residues 576–580 (KMSKS). Lys579 serves as a coordination point for ATP.

The protein belongs to the class-I aminoacyl-tRNA synthetase family.

Its subcellular location is the cytoplasm. It carries out the reaction tRNA(Leu) + L-leucine + ATP = L-leucyl-tRNA(Leu) + AMP + diphosphate. The chain is Leucine--tRNA ligase from Bacillus cereus (strain B4264).